The chain runs to 1194 residues: Immunoglobulin superfamily member 3 (1194 aa).

An N-terminal signal peptide occupies residues 1 to 19 (MKCFFPVLSCLAVLGVVSA). 8 Ig-like C2-type domains span residues 20-138 (QRQV…AKMN), 143-262 (PDSL…WYAM), 276-386 (PTDK…KTVT), 401-539 (PIIV…ISIT), 545-661 (FAVT…WTRL), 676-803 (PVTK…EEVS), 813-945 (PDSR…TALT), and 949-1097 (PDAS…YRLT). Residues 20–1124 (QRQVTVQEGP…LQSIICSNDA (1105 aa)) are Extracellular-facing. Cystine bridges form between Cys42–Cys120 and Cys167–Cys246. N-linked (GlcNAc...) asparagine glycosylation is present at Asn43. An EWI motif motif is present at residues 250 to 252 (EWI). Residues Cys302 and Cys376 are joined by a disulfide bond. The N-linked (GlcNAc...) asparagine glycan is linked to Asn418. 2 cysteine pairs are disulfide-bonded: Cys432–Cys511 and Cys566–Cys645. An N-linked (GlcNAc...) asparagine glycan is attached at Asn655. 3 disulfide bridges follow: Cys701–Cys782, Cys838–Cys918, and Cys974–Cys1080. N-linked (GlcNAc...) asparagine glycosylation occurs at Asn842. Residues 997–1033 (AGGKRSSPGLEEQEEEREEEEEEDDDDDDDPTERTAL) form a disordered region. A compositionally biased stretch (acidic residues) spans 1007–1027 (EEQEEEREEEEEEDDDDDDDP). Residue Asn1077 is glycosylated (N-linked (GlcNAc...) asparagine). The chain crosses the membrane as a helical span at residues 1125-1145 (LFYFVFFYPFPIFGILIITIL). Residues 1146–1194 (LVRFKSRNSSKNSDGKNGVPLLWIKEPHLNYSPTCLEPPVLSIHPGAID) are Cytoplasmic-facing.

As to expression, expressed in a wide range of tissues with High expression in Placenta, kidney and lung.

It is found in the membrane. The sequence is that of Immunoglobulin superfamily member 3 (IGSF3) from Homo sapiens (Human).